We begin with the raw amino-acid sequence, 403 residues long: uncharacterized protein (403 aa).

H81 lines the Zn(2+) pocket. D83 is an active-site residue. D114 lines the Zn(2+) pocket. The active-site Proton acceptor is the E148. Zn(2+) contacts are provided by E149, E174, and H374.

This sequence belongs to the peptidase M20A family. Requires Zn(2+) as cofactor. The cofactor is Co(2+).

This is an uncharacterized protein from Escherichia coli O157:H7.